The primary structure comprises 480 residues: Glycogen synthase (480 aa).

Residue Lys-15 participates in ADP-alpha-D-glucose binding.

Belongs to the glycosyltransferase 1 family. Bacterial/plant glycogen synthase subfamily.

It catalyses the reaction [(1-&gt;4)-alpha-D-glucosyl](n) + ADP-alpha-D-glucose = [(1-&gt;4)-alpha-D-glucosyl](n+1) + ADP + H(+). It functions in the pathway glycan biosynthesis; glycogen biosynthesis. Its function is as follows. Synthesizes alpha-1,4-glucan chains using ADP-glucose. This chain is Glycogen synthase, found in Opitutus terrae (strain DSM 11246 / JCM 15787 / PB90-1).